Consider the following 223-residue polypeptide: Uracil-DNA glycosylase (223 aa).

The active-site Proton acceptor is D67.

It belongs to the uracil-DNA glycosylase (UDG) superfamily. UNG family.

It localises to the cytoplasm. It catalyses the reaction Hydrolyzes single-stranded DNA or mismatched double-stranded DNA and polynucleotides, releasing free uracil.. Functionally, excises uracil residues from the DNA which can arise as a result of misincorporation of dUMP residues by DNA polymerase or due to deamination of cytosine. This Borrelia turicatae (strain 91E135) protein is Uracil-DNA glycosylase.